Reading from the N-terminus, the 640-residue chain is Chaperone protein dnaK2 (640 aa).

Thr-197 carries the phosphothreonine; by autocatalysis modification. The tract at residues 605-640 (VYQSAQSSDGTGSSSSGGSGSGGDDEVIDAEFSETK) is disordered. Acidic residues predominate over residues 627–640 (GDDEVIDAEFSETK).

It belongs to the heat shock protein 70 family.

Acts as a chaperone. The polypeptide is Chaperone protein dnaK2 (dnaK2) (Thermosynechococcus vestitus (strain NIES-2133 / IAM M-273 / BP-1)).